The chain runs to 142 residues: Large ribosomal subunit protein uL11 (142 aa).

It belongs to the universal ribosomal protein uL11 family. In terms of assembly, part of the ribosomal stalk of the 50S ribosomal subunit. Interacts with L10 and the large rRNA to form the base of the stalk. L10 forms an elongated spine to which L12 dimers bind in a sequential fashion forming a multimeric L10(L12)X complex. In terms of processing, one or more lysine residues are methylated.

Forms part of the ribosomal stalk which helps the ribosome interact with GTP-bound translation factors. The polypeptide is Large ribosomal subunit protein uL11 (Maricaulis maris (strain MCS10) (Caulobacter maris)).